The chain runs to 1254 residues: Juxtamembrane domain-associated catenin (1254 aa).

Disordered regions lie at residues 1–38, 84–106, and 145–209; these read MISS…TMRK, AGPT…DNPP, and PYSN…SAPG. Residues 12-22 show a composition bias toward acidic residues; sequence PIPEEGTEADG. The segment covering 145 to 157 has biased composition (polar residues); that stretch reads PYSNIDFDSSGLP. 4 Fibronectin type-III domains span residues 207–302, 315–411, 428–518, and 530–624; these read APGV…IPIS, APGR…IRPA, PPGQ…LRPT, and ILEA…IEPS. Residues 412-433 form a disordered region; it reads APQRHVPARKVSESVQPPGQPQ. The segment at 662–685 is disordered; that stretch reads MVRESPPLPERDDSPPPLRRANNN. ARM repeat units lie at residues 733-775, 777-820, 874-922, 969-1012, and 1016-1058; these read GGIP…AVME, DGVR…ESAT, NLIE…YDPA, HVVK…RAAV, and KGLP…KYAL. Residues 920–960 are disordered; that stretch reads DPAAAHSSSSKNMKHVASPKPEKKKKDKEKKKDKNPKNIVT. Positions 1159 to 1254 are disordered; it reads GTARRGDSST…GGGNIDDSWV (96 aa). The span at 1166 to 1176 shows a compositional bias: polar residues; it reads SSTLARPISSQ. The segment covering 1177 to 1187 has biased composition (basic and acidic residues); it reads GRERPSMHQLD.

The protein belongs to the beta-catenin family. Associated with the catenin-cadherin complex consisting of hmr-1, hmp-1 and hmp-2. Interacts with hmr-1. Interacts with picc-1. As to expression, epidermal cells.

It localises to the cell junction. It is found in the adherens junction. The protein localises to the nucleus. Functionally, may act as a positive modulator of hmr-1 function during epidermal morphogenesis. Required for proper localization of other junctional components, such as pac-1. The sequence is that of Juxtamembrane domain-associated catenin (jac-1) from Caenorhabditis elegans.